A 49-amino-acid polypeptide reads, in one-letter code: Glutathione peroxidase (49 aa).

This sequence belongs to the glutathione peroxidase family.

It carries out the reaction 2 glutathione + H2O2 = glutathione disulfide + 2 H2O. With respect to regulation, inhibited by Cu(2+), SDS and DTT. Activity is slightly increased by Fe(2+), Mn(2+), triton X-100 and EDTA. In terms of biological role, glutathione peroxidase which may protect the cell from oxidative damage. The chain is Glutathione peroxidase from Lactiplantibacillus plantarum (Lactobacillus plantarum).